A 386-amino-acid polypeptide reads, in one-letter code: Dual-specificity RNA methyltransferase RlmN (386 aa).

E96 serves as the catalytic Proton acceptor. Residues 102–340 (ENDRATLCVS…VITRRTRGED (239 aa)) enclose the Radical SAM core domain. The cysteines at positions 109 and 345 are disulfide-linked. Residues C116, C120, and C123 each coordinate [4Fe-4S] cluster. Residues 170–171 (GE), S202, 224–226 (SIH), and N302 each bind S-adenosyl-L-methionine. The active-site S-methylcysteine intermediate is the C345.

The protein belongs to the radical SAM superfamily. RlmN family. [4Fe-4S] cluster serves as cofactor.

The protein localises to the cytoplasm. The enzyme catalyses adenosine(2503) in 23S rRNA + 2 reduced [2Fe-2S]-[ferredoxin] + 2 S-adenosyl-L-methionine = 2-methyladenosine(2503) in 23S rRNA + 5'-deoxyadenosine + L-methionine + 2 oxidized [2Fe-2S]-[ferredoxin] + S-adenosyl-L-homocysteine. The catalysed reaction is adenosine(37) in tRNA + 2 reduced [2Fe-2S]-[ferredoxin] + 2 S-adenosyl-L-methionine = 2-methyladenosine(37) in tRNA + 5'-deoxyadenosine + L-methionine + 2 oxidized [2Fe-2S]-[ferredoxin] + S-adenosyl-L-homocysteine. Functionally, specifically methylates position 2 of adenine 2503 in 23S rRNA and position 2 of adenine 37 in tRNAs. m2A2503 modification seems to play a crucial role in the proofreading step occurring at the peptidyl transferase center and thus would serve to optimize ribosomal fidelity. The sequence is that of Dual-specificity RNA methyltransferase RlmN from Colwellia psychrerythraea (strain 34H / ATCC BAA-681) (Vibrio psychroerythus).